A 102-amino-acid polypeptide reads, in one-letter code: Large ribosomal subunit protein bL21 (102 aa).

It belongs to the bacterial ribosomal protein bL21 family. In terms of assembly, part of the 50S ribosomal subunit. Contacts protein L20.

Functionally, this protein binds to 23S rRNA in the presence of protein L20. The polypeptide is Large ribosomal subunit protein bL21 (Lactiplantibacillus plantarum (strain ATCC BAA-793 / NCIMB 8826 / WCFS1) (Lactobacillus plantarum)).